The following is a 129-amino-acid chain: Glycophorin-A (129 aa).

The signal sequence occupies residues 1–17 (MYEKIVIVLLLSGYIST). Glutamine 18 carries the pyrrolidone carboxylic acid modification. Topologically, residues 18-82 (QDVTEIIPHE…QLVHIFSEPV (65 aa)) are extracellular. O-linked (GalNAc...) serine glycans are attached at residues serine 29 and serine 30. A glycan (O-linked (GalNAc...) threonine) is linked at threonine 34. O-linked (GalNAc...) serine glycosylation is present at serine 40. Residues threonine 41 and threonine 48 are each glycosylated (O-linked (GalNAc...) threonine). An O-linked (GalNAc...) serine glycan is attached at serine 56. A helical transmembrane segment spans residues 83–103 (IIGIIYAVMLGIIITILSIAF). The Cytoplasmic segment spans residues 104-129 (CIGQLTKKSSLPAQVASPEDVDPEVL).

Belongs to the glycophorin-A family. Homodimer. Component of the ankyrin-1 complex in the erythrocyte, composed of ANK1, RHCE, RHAG, SLC4A1, EPB42, GYPA, GYPB and AQP1. Interacts with SLC4A1; a GYPA monomer is bound at each end of the SLC4A1 dimer forming a heterotetramer.

The protein localises to the membrane. Its function is as follows. Component of the ankyrin-1 complex, a multiprotein complex involved in the stability and shape of the erythrocyte membrane. Glycophorin A is the major intrinsic membrane protein of the erythrocyte. The N-terminal glycosylated segment, which lies outside the erythrocyte membrane, has MN blood group receptors. Appears to be important for the function of SLC4A1 and is required for high activity of SLC4A1. May be involved in translocation of SLC4A1 to the plasma membrane. In Canis lupus familiaris (Dog), this protein is Glycophorin-A.